The sequence spans 161 residues: Large ribosomal subunit protein uL16 (161 aa).

The protein belongs to the universal ribosomal protein uL16 family.

The polypeptide is Large ribosomal subunit protein uL16 (Methanosphaera stadtmanae (strain ATCC 43021 / DSM 3091 / JCM 11832 / MCB-3)).